Reading from the N-terminus, the 109-residue chain is Large ribosomal subunit protein uL24 (109 aa).

Belongs to the universal ribosomal protein uL24 family. Part of the 50S ribosomal subunit.

In terms of biological role, one of two assembly initiator proteins, it binds directly to the 5'-end of the 23S rRNA, where it nucleates assembly of the 50S subunit. Its function is as follows. One of the proteins that surrounds the polypeptide exit tunnel on the outside of the subunit. The polypeptide is Large ribosomal subunit protein uL24 (Syntrophobacter fumaroxidans (strain DSM 10017 / MPOB)).